Reading from the N-terminus, the 160-residue chain is 2-C-methyl-D-erythritol 2,4-cyclodiphosphate synthase (160 aa).

Residues aspartate 11 and histidine 13 each coordinate a divalent metal cation. Residues 11 to 13 (DVH) and 37 to 38 (HS) contribute to the 4-CDP-2-C-methyl-D-erythritol 2-phosphate site. Histidine 45 is an a divalent metal cation binding site. Residues 59–61 (DIG), 64–68 (FPDTD), 103–109 (AQAPKMA), 135–138 (TTTE), phenylalanine 142, and arginine 145 contribute to the 4-CDP-2-C-methyl-D-erythritol 2-phosphate site.

Belongs to the IspF family. In terms of assembly, homotrimer. The cofactor is a divalent metal cation.

It carries out the reaction 4-CDP-2-C-methyl-D-erythritol 2-phosphate = 2-C-methyl-D-erythritol 2,4-cyclic diphosphate + CMP. The protein operates within isoprenoid biosynthesis; isopentenyl diphosphate biosynthesis via DXP pathway; isopentenyl diphosphate from 1-deoxy-D-xylulose 5-phosphate: step 4/6. Involved in the biosynthesis of isopentenyl diphosphate (IPP) and dimethylallyl diphosphate (DMAPP), two major building blocks of isoprenoid compounds. Catalyzes the conversion of 4-diphosphocytidyl-2-C-methyl-D-erythritol 2-phosphate (CDP-ME2P) to 2-C-methyl-D-erythritol 2,4-cyclodiphosphate (ME-CPP) with a corresponding release of cytidine 5-monophosphate (CMP). The chain is 2-C-methyl-D-erythritol 2,4-cyclodiphosphate synthase from Thiobacillus denitrificans (strain ATCC 25259 / T1).